A 795-amino-acid polypeptide reads, in one-letter code: Phospholipase A-2-activating protein (795 aa).

WD repeat units follow at residues 17–56 (HELD…RSFT), 63–107 (GHSN…PLYI), 110–148 (GHKN…MTLQ), 149–188 (GHTA…RTFS), 190–227 (HEDC…LEVY), 229–268 (GHTN…QTIR), and 270–307 (PAQS…TASA). Phosphoserine is present on Ser50. Residues 366–465 (QWSVSEGRWI…KGQMLGLGNP (100 aa)) form the PFU domain. N6-acetyllysine is present on Lys529. A PUL domain is found at 533 to 794 (IYFPKKEAVT…SECCRFILNL (262 aa)). ARM repeat units follow at residues 546–588 (ANPT…NSSS), 589–620 (EKPT…LRLS), 621–669 (IKHP…CFVG), 670–715 (QAGQ…CFHK), 716–755 (DHNI…LISD), and 756–795 (DSNA…LNLL).

This sequence belongs to the WD repeat PLAP family. As to quaternary structure, interacts with ubiquitin. Interacts with UBXN6, VCP and YOD1; may form a complex involved in macroautophagy.

The protein resides in the nucleus. Its subcellular location is the cytoplasm. It is found in the synapse. Functionally, plays a role in protein ubiquitination, sorting and degradation through its association with VCP. Involved in ubiquitin-mediated membrane proteins trafficking to late endosomes in an ESCRT-dependent manner, and hence plays a role in synaptic vesicle recycling. May play a role in macroautophagy, regulating for instance the clearance of damaged lysosomes. Plays a role in cerebellar Purkinje cell development. Positively regulates cytosolic and calcium-independent phospholipase A2 activities in a tumor necrosis factor alpha (TNF-alpha)- or lipopolysaccharide (LPS)-dependent manner, and hence prostaglandin E2 biosynthesis. The sequence is that of Phospholipase A-2-activating protein (PLAA) from Homo sapiens (Human).